We begin with the raw amino-acid sequence, 967 residues long: MKKKLKSVLIWFLIFTFNLSLGSFREVFADNNDAVLATAITLSKNEDKLLVNQTDTLTAVVTPDNASNKGVTWSSSDTNTAAVDQNGKITALKVGTVTITAATQDGSNLSSSCTVSITRLANSIVLNKMVDKLPVGQTDLLTALVRPLDSAVKDVTWTTSDPSVVSVDDKGNIKALKLGMAVVTAAVNDGRNLHASCNVYVTNLLSKRKKADLVVTLDNSMNIDKTTFKDKLNKYIESKLKGSNIDYTIQSIQGYKSKKVLIIQDQPAWESGTKVYDDIKQEGYTSDVITANQISSTELTQYSHIYIPSDQAQSFYDELNQNYSKLEAWTKGGGILIFNAADEGHHSGQWQGSFLGLTHTPSDFQPTITIVKQDPILTANLKTTITGNYAAHSQFTSYPSNSIIFAVGNKNLPTILEYRYGDGLVFAQTTTAEFYATNSGDLSPYLDNEIKYTIQKTLGRSFSDILKKPTWRENSEKFVINLGDTLANDVKENSMAQTLAELESNKAYVTLIGNNNNKDTLNSFINKNDGRGMFIDNSDLDGALSKAGDYIMTVLNKEEQNSNMFLTDDYINYNESSSEDVSWSYTQDCKHLNYDNDFVNCSKTGDIALDNDLGISDFANGQWVNNEINEFKKPGKYTIAYKFKDNAIVNETVNVNRKPTPIFTAYTAQDAVSGKYDVVIKDEDKSYDIDHENSDGDRKGIVNSKFQWKEVTQGVNDTWHDGKLPSGQDSNKDFIVKLEVQDLEGQWSNPLVKYITTRNSNVAPHAQFTESAEEMPVDQLNNDASVGMDAIFTDESYDANGDSIREHWIVTDNNGNTIYDSTSMPKASVFVGKPLGTYNVTLTCDDGPTPKVGAMLTSDSYTLQLKLVPINHKPVAKFEVDNTSKVPADIKITEDSTDPDGDKITEKDWTVTDDKGKVVLQTENKLPDLSNLNGSYTITLKVKDSPVGLPELWSDPLSKTIIVEGAK.

Residues 1–29 form the signal peptide; it reads MKKKLKSVLIWFLIFTFNLSLGSFREVFA. BIG2 domains are found at residues 38 to 107 and 133 to 190; these read TAIT…QDGS and LPVG…VNDG.

This is an uncharacterized protein from Clostridium acetobutylicum (strain ATCC 824 / DSM 792 / JCM 1419 / IAM 19013 / LMG 5710 / NBRC 13948 / NRRL B-527 / VKM B-1787 / 2291 / W).